The sequence spans 230 residues: Orotidine 5'-phosphate decarboxylase (230 aa).

Substrate-binding positions include D8, K32, 59–68 (DLKLYDIPNT), T118, R178, Q187, G207, and R208. The active-site Proton donor is K61.

The protein belongs to the OMP decarboxylase family. Type 1 subfamily. As to quaternary structure, homodimer.

It catalyses the reaction orotidine 5'-phosphate + H(+) = UMP + CO2. It participates in pyrimidine metabolism; UMP biosynthesis via de novo pathway; UMP from orotate: step 2/2. Catalyzes the decarboxylation of orotidine 5'-monophosphate (OMP) to uridine 5'-monophosphate (UMP). The protein is Orotidine 5'-phosphate decarboxylase of Nautilia profundicola (strain ATCC BAA-1463 / DSM 18972 / AmH).